A 305-amino-acid chain; its full sequence is MKHLLGLRELSKEDIIKILNLAKDMKTILKSETKKTPHLQGYSVVTLFYENSTRTRTSFELAAKFMSANTTSISVQTSSVQKGESLLDTVKTLEALKTDVLIVRHAVSGVPHFIAKNCSFSVINAGDGMNEHPTQALLDMFTIRERLGTIERLKIAIIGDIFHSRVARSNIWGLSKFDNQITVFGPQTLIPPYIENFAYVASSLEEAVSGKDVVIDLRIQLERQKRGFITSKQEYYKFYGLNEDIMRYISGSTLIMHPGPVNRGVEISSEVLQLPNSTIDEQVTNGIAVRMAVLYLCTRKEGIYR.

Arginine 54 and threonine 55 together coordinate carbamoyl phosphate. Position 82 (lysine 82) interacts with L-aspartate. Carbamoyl phosphate is bound by residues arginine 104, histidine 132, and glutamine 135. Residues arginine 165 and arginine 218 each coordinate L-aspartate. The carbamoyl phosphate site is built by glycine 259 and proline 260.

The protein belongs to the aspartate/ornithine carbamoyltransferase superfamily. ATCase family. As to quaternary structure, heterododecamer (2C3:3R2) of six catalytic PyrB chains organized as two trimers (C3), and six regulatory PyrI chains organized as three dimers (R2).

It carries out the reaction carbamoyl phosphate + L-aspartate = N-carbamoyl-L-aspartate + phosphate + H(+). Its pathway is pyrimidine metabolism; UMP biosynthesis via de novo pathway; (S)-dihydroorotate from bicarbonate: step 2/3. Catalyzes the condensation of carbamoyl phosphate and aspartate to form carbamoyl aspartate and inorganic phosphate, the committed step in the de novo pyrimidine nucleotide biosynthesis pathway. This Caldicellulosiruptor bescii (strain ATCC BAA-1888 / DSM 6725 / KCTC 15123 / Z-1320) (Anaerocellum thermophilum) protein is Aspartate carbamoyltransferase catalytic subunit.